Consider the following 88-residue polypeptide: Homeobox protein knotted-1-like 11 (88 aa).

Residues 4 to 24 enclose the ELK domain; that stretch reads ELKEMLLKKYSGCLSRLRSEF. A DNA-binding region (homeobox; TALE-type) is located at residues 25 to 88; the sequence is LKKRKKGKLP…NQRKRHWKPS (64 aa).

It belongs to the TALE/KNOX homeobox family.

The protein resides in the nucleus. In terms of biological role, probably binds to the DNA sequence 5'-TGAC-3'. The polypeptide is Homeobox protein knotted-1-like 11 (KNOX11) (Zea mays (Maize)).